A 168-amino-acid chain; its full sequence is MNEFTHFNEQGRAKMVDISEKEASVRTAAAVSSVSMNREVHEKIKNREIGKGDVLAVAQVAGIMAAKQTSAIIPMCHPIALKGVDIAFCWEKKEQKSILHIQSNVKTKGSTGVEMEALTSASVCALTVYDMCKAADKGMVIGPTFLLEKTGGKNGDYKREKADVDMED.

Residues methionine 75–histidine 77 and methionine 115–glutamate 116 contribute to the substrate site. Residue aspartate 130 is part of the active site.

It belongs to the MoaC family. Homohexamer; trimer of dimers.

It carries out the reaction (8S)-3',8-cyclo-7,8-dihydroguanosine 5'-triphosphate = cyclic pyranopterin phosphate + diphosphate. It functions in the pathway cofactor biosynthesis; molybdopterin biosynthesis. In terms of biological role, catalyzes the conversion of (8S)-3',8-cyclo-7,8-dihydroguanosine 5'-triphosphate to cyclic pyranopterin monophosphate (cPMP). This Bacillus licheniformis (strain ATCC 14580 / DSM 13 / JCM 2505 / CCUG 7422 / NBRC 12200 / NCIMB 9375 / NCTC 10341 / NRRL NRS-1264 / Gibson 46) protein is Cyclic pyranopterin monophosphate synthase.